We begin with the raw amino-acid sequence, 367 residues long: Glutamate 5-kinase (367 aa).

Lys-10 serves as a coordination point for ATP. Positions 50, 137, and 149 each coordinate substrate. ATP contacts are provided by residues 169 to 170 (TD) and 211 to 217 (TGGMSTK). Positions 275–353 (AGEITVDEGA…QQIDAILGYE (79 aa)) constitute a PUA domain.

It belongs to the glutamate 5-kinase family.

It localises to the cytoplasm. The enzyme catalyses L-glutamate + ATP = L-glutamyl 5-phosphate + ADP. It participates in amino-acid biosynthesis; L-proline biosynthesis; L-glutamate 5-semialdehyde from L-glutamate: step 1/2. Catalyzes the transfer of a phosphate group to glutamate to form L-glutamate 5-phosphate. In Salmonella paratyphi A (strain ATCC 9150 / SARB42), this protein is Glutamate 5-kinase.